Consider the following 230-residue polypeptide: MDKQLLIFDFDGTLIDSVPDLADAVNAMLTTLGKAPYPIDTIRNWVGNGSRMLVERALVGKIEVSEGELAKETIDHAEQVFFDAYSKMGGSKTVAYPNVDSGLKKLKAAGFKLALVTNKPIRFVPKILQFFGWHDIFSEVLGGDSLPTKKPDPAPLLHVCEVLNINPAQAVMIGDSINDILAGQNANMDTLGLSYGYNYGQDIRQLNPTEAFDDFSALVDYLLKAYPANN.

Catalysis depends on Asp-9, which acts as the Nucleophile. Mg(2+) contacts are provided by Asp-9, Asp-11, and Asp-175.

The protein belongs to the HAD-like hydrolase superfamily. CbbY/CbbZ/Gph/YieH family. Mg(2+) is required as a cofactor.

It carries out the reaction 2-phosphoglycolate + H2O = glycolate + phosphate. Its pathway is organic acid metabolism; glycolate biosynthesis; glycolate from 2-phosphoglycolate: step 1/1. Its function is as follows. Specifically catalyzes the dephosphorylation of 2-phosphoglycolate. Is involved in the dissimilation of the intracellular 2-phosphoglycolate formed during the DNA repair of 3'-phosphoglycolate ends, a major class of DNA lesions induced by oxidative stress. This Psychrobacter arcticus (strain DSM 17307 / VKM B-2377 / 273-4) protein is Phosphoglycolate phosphatase.